Here is a 283-residue protein sequence, read N- to C-terminus: tRNA-cytidine(32) 2-sulfurtransferase (283 aa).

The PP-loop motif motif lies at 37–42; sequence SGGKDS. Residues Cys-112, Cys-115, and Cys-203 each coordinate [4Fe-4S] cluster.

The protein belongs to the TtcA family. As to quaternary structure, homodimer. Mg(2+) serves as cofactor. It depends on [4Fe-4S] cluster as a cofactor.

The protein resides in the cytoplasm. The catalysed reaction is cytidine(32) in tRNA + S-sulfanyl-L-cysteinyl-[cysteine desulfurase] + AH2 + ATP = 2-thiocytidine(32) in tRNA + L-cysteinyl-[cysteine desulfurase] + A + AMP + diphosphate + H(+). The protein operates within tRNA modification. In terms of biological role, catalyzes the ATP-dependent 2-thiolation of cytidine in position 32 of tRNA, to form 2-thiocytidine (s(2)C32). The sulfur atoms are provided by the cysteine/cysteine desulfurase (IscS) system. This is tRNA-cytidine(32) 2-sulfurtransferase from Legionella pneumophila (strain Corby).